The primary structure comprises 470 residues: Fumarate reductase 1 (470 aa).

6–20 provides a ligand contact to FAD; the sequence is VVVIGTGLAGLAAAN. At S66 the chain carries Phosphoserine. Active-site residues include H249 and R272.

It belongs to the FAD-dependent oxidoreductase 2 family. FRD/SDH subfamily. FAD is required as a cofactor. The N-terminus is blocked.

The protein resides in the cytoplasm. It carries out the reaction succinate + NAD(+) = fumarate + NADH + H(+). Irreversibly catalyzes the reduction of fumarate to succinate. Together with the second isozyme of soluble fumarate reductase (OSM1), essential for anaerobic growth. Involved in maintaining redox balance. Reduction of fumarate is the main source of succinate during fermentation, and under anaerobic conditions, the formation of succinate is strictly required for the reoxidation of FADH(2). In Saccharomyces cerevisiae (strain ATCC 204508 / S288c) (Baker's yeast), this protein is Fumarate reductase 1 (FRD1).